A 105-amino-acid chain; its full sequence is Nucleoid-associated protein RPC_4847 (105 aa).

This sequence belongs to the YbaB/EbfC family. In terms of assembly, homodimer.

Its subcellular location is the cytoplasm. The protein resides in the nucleoid. In terms of biological role, binds to DNA and alters its conformation. May be involved in regulation of gene expression, nucleoid organization and DNA protection. This is Nucleoid-associated protein RPC_4847 from Rhodopseudomonas palustris (strain BisB18).